The sequence spans 462 residues: Transcript termination protein A18 (462 aa).

The Helicase ATP-binding domain maps to 99–255 (KCKEKRPLYT…NSIINFIKFS (157 aa)). 112 to 119 (LACGFGKT) is a binding site for ATP. Residues 205-208 (DEAH) carry the DEAH box motif. One can recognise a Helicase C-terminal domain in the interval 308–459 (IVDKIIETFK…ATKLGFREVS (152 aa)).

The protein belongs to the helicase family. Poxviruses subfamily. As to quaternary structure, interacts with G2. Might be part of a transcription complex composed at least of G2, A18, and H5.

Its subcellular location is the virion. Functionally, DNA helicase which seems to act as a postreplicative transcription termination factor. Involved in ATP-dependent release of nascent RNA. Forms a stable complex with single-stranded DNA, and to a lesser extent RNA. In Vertebrata (FPV), this protein is Transcript termination protein A18.